The following is a 358-amino-acid chain: Src kinase-associated phosphoprotein 2 (358 aa).

Phosphoserine is present on residues Ser5 and Ser9. Positions 14–64 are homodimerization; the sequence is PEEIRNLLADVETFVADTLKGENLSKKAKEKRESLIKKIKDVKSVYLQEFQ. A Phosphotyrosine modification is found at Tyr75. 2 positions are modified to phosphoserine: Ser87 and Ser90. One can recognise a PH domain in the interval 116-219; that stretch reads FVIKAGYLEK…WVQQLKFILQ (104 aa). A phosphotyrosine mark is found at Tyr151 and Tyr197. Residue Ser223 is modified to Phosphoserine. The segment at 232 to 292 is disordered; the sequence is ERGELYDDVD…RDSVHHTSGD (61 aa). Over residues 255–270 the composition is skewed to acidic residues; it reads IDDEIYEELPEEEEDT. Tyr260 is modified (phosphotyrosine; by FYN). A phosphoserine mark is found at Ser272, Ser282, and Ser285. Positions 274-292 are enriched in basic and acidic residues; sequence KMDEQGKGSRDSVHHTSGD. Positions 296–357 constitute an SH3 domain; it reads DYANFYQGLW…PKAYLMEMYD (62 aa).

It belongs to the SKAP family. As to quaternary structure, interacts with LAT, GRB2, PTK2B and PRAM1. Homodimer. Interacts with FYB1, which is required for SKAP2 protein stability. Interacts with PTPNS1. Part of a complex consisting of SKAP2, FYB1 and PTPNS1. Part of a complex consisting of SKAP2, FYB1 and PIRB. May interact with actin. May interact with FYN, HCK and LYN. Interacts with FASLG. Dephosphorylated on Tyr-75 by PTPN22. Phosphorylated by FYN on Tyr-260. In case of infection with Y.pseudotuberculosis, dephosphorylated by bacterial phosphatase yopH. In terms of tissue distribution, expressed in kidney, lung, liver, spleen, bone marrow and testis. Present in T-cells, B-cells, and all cells of the myelomonocytic lineage. Present in all brain regions, with highest levels in neurons from the Purkinje cell layer, hippocampal gyrus, cortex and substantia nigra (at protein level).

It localises to the cytoplasm. Functionally, may be involved in B-cell and macrophage adhesion processes. In B-cells, may act by coupling the B-cell receptor (BCR) to integrin activation. May play a role in src signaling pathway. This is Src kinase-associated phosphoprotein 2 (Skap2) from Mus musculus (Mouse).